The primary structure comprises 361 residues: MKKNLMLIFGGVSFEHEISCKSAYSVYLALLDLNKYNIYSAYIDKCTGIWYLLDSVSDPPKPIDTDVLPIVSLLPGFGIFSNNKNLEIDVVFPVVHGRTGEDGAIQGVLKVMDIPCVGAGIIGSAISSNKYFCKLLLKSFNIPIVPFIGFRQYDYSLDKEEIKRNVKEVLGYPVIVKPAVLGSSIGINVAYSENQIESCIEEALKYDLTIVIEKFIEAREIECSIIGNEKMKIFSPGEVVVQDFIFYDYDAKYSVIPGNSIIFNIPAHLETNQLLSIKEYAFLVYKNLELRGMARVDFFVEKKSGTIYLNEINTIPGFTDISMFSKMCSHDGLQFKDLIDNLIDYAFQSYINRKKRINFKD.

In terms of domain architecture, ATP-grasp spans 134–344; the sequence is KLLLKSFNIP…FKDLIDNLID (211 aa). 167–222 contributes to the ATP binding site; sequence KEVLGYPVIVKPAVLGSSIGINVAYSENQIESCIEEALKYDLTIVIEKFIEAREIE. Mg(2+) contacts are provided by Asp-297, Glu-311, and Asn-313.

Belongs to the D-alanine--D-alanine ligase family. Requires Mg(2+) as cofactor. Mn(2+) serves as cofactor.

Its subcellular location is the cytoplasm. The enzyme catalyses 2 D-alanine + ATP = D-alanyl-D-alanine + ADP + phosphate + H(+). The protein operates within cell wall biogenesis; peptidoglycan biosynthesis. In terms of biological role, cell wall formation. The chain is D-alanine--D-alanine ligase from Borreliella afzelii (strain PKo) (Borrelia afzelii).